An 89-amino-acid polypeptide reads, in one-letter code: Small ribosomal subunit protein uS15 (89 aa).

Belongs to the universal ribosomal protein uS15 family. In terms of assembly, part of the 30S ribosomal subunit. Forms a bridge to the 50S subunit in the 70S ribosome, contacting the 23S rRNA.

Its function is as follows. One of the primary rRNA binding proteins, it binds directly to 16S rRNA where it helps nucleate assembly of the platform of the 30S subunit by binding and bridging several RNA helices of the 16S rRNA. In terms of biological role, forms an intersubunit bridge (bridge B4) with the 23S rRNA of the 50S subunit in the ribosome. The polypeptide is Small ribosomal subunit protein uS15 (Desulfosudis oleivorans (strain DSM 6200 / JCM 39069 / Hxd3) (Desulfococcus oleovorans)).